We begin with the raw amino-acid sequence, 296 residues long: Protease HtpX homolog (296 aa).

The next 2 membrane-spanning stretches (helical) occupy residues 14–34 (VVLLIVFFCLLAAIGAAVGYL) and 39–59 (YQFGLVLALIIGVIYAVSMIF). A Zn(2+)-binding site is contributed by His-143. The active site involves Glu-144. Zn(2+) is bound at residue His-147. 2 helical membrane-spanning segments follow: residues 158-178 (IAVALASAVTLISSIGSRMLF) and 195-215 (ILVLIFSILSLILAPLAASLV). A Zn(2+)-binding site is contributed by Glu-224.

This sequence belongs to the peptidase M48B family. Zn(2+) serves as cofactor.

It is found in the cell membrane. This Streptococcus agalactiae serotype Ia (strain ATCC 27591 / A909 / CDC SS700) protein is Protease HtpX homolog.